A 329-amino-acid polypeptide reads, in one-letter code: Olfactory receptor 5AL1 (329 aa).

Residues 1–44 (MCALKGFLEENFYTYSVAKGNHSTVYEFILLGLTDNAELQVTLF) are Extracellular-facing. A glycan (N-linked (GlcNAc...) asparagine) is linked at Asn21. A helical transmembrane segment spans residues 45–65 (GIFLVVYLASFMGNFGLIMLI). Residues 66 to 73 (QISPQLHT) lie on the Cytoplasmic side of the membrane. A helical membrane pass occupies residues 74 to 94 (PMYFFLSHLAFVDFSFTSSVA). Residues 95–113 (PNTLVNFLCEVKSITFYAC) lie on the Extracellular side of the membrane. Cys113 and Cys205 form a disulfide bridge. A helical membrane pass occupies residues 114–134 (AIQVCCFITFVVCELYLLSIM). At 135–157 (AYDRYVAICNPLLYVILIPRKLC) the chain is on the cytoplasmic side. Residues 158-178 (IKLIASTYVYGFTVGLVQTVA) traverse the membrane as a helical segment. The Extracellular portion of the chain corresponds to 179 to 220 (TSYLSFCDSNVINHFYHDDVPLVALACSDTHVKELMLLIIAG). A helical transmembrane segment spans residues 221 to 241 (FNTLCSLVIVLISYGFIFFAI). The Cytoplasmic segment spans residues 242–253 (LRIHSAEGRQKA). A helical membrane pass occupies residues 254 to 274 (FSTSASHLTSITIFYGTIIFM). Topologically, residues 275–287 (YPQPKSSHSLNMD) are extracellular. The helical transmembrane segment at 288-308 (KVASVFNVVVIPTLNPLIYSL) threads the bilayer. Topologically, residues 309 to 329 (RNQEVKNALKRIIEKLCLAVK) are cytoplasmic.

The protein belongs to the G-protein coupled receptor 1 family.

Its subcellular location is the cell membrane. Functionally, odorant receptor. The sequence is that of Olfactory receptor 5AL1 (OR5AL1) from Homo sapiens (Human).